Consider the following 247-residue polypeptide: Spermatogenesis-associated protein 46 (247 aa).

The interval Q125–T164 is disordered. The segment covering S137 to N147 has biased composition (polar residues).

It localises to the nucleus membrane. Plays a role in spermiogenesis and fertilization. This is Spermatogenesis-associated protein 46 (SPATA46) from Bos taurus (Bovine).